Consider the following 456-residue polypeptide: Bifunctional protein GlmU (456 aa).

Residues 1-229 (MLNNTMSVVI…ISETDGVNNR (229 aa)) form a pyrophosphorylase region. Residues 11–14 (LAAG), Lys-25, Gln-76, 81–82 (GT), 103–105 (YGD), Gly-140, Glu-154, Asn-169, and Asn-227 each bind UDP-N-acetyl-alpha-D-glucosamine. Residue Asp-105 coordinates Mg(2+). Asn-227 is a Mg(2+) binding site. The segment at 230–250 (LQLSRLERIYQAEQAEKLLLA) is linker. The tract at residues 251–456 (GVMLRDPARF…QGWQRPVKKK (206 aa)) is N-acetyltransferase. UDP-N-acetyl-alpha-D-glucosamine is bound by residues Arg-333 and Lys-351. The active-site Proton acceptor is the His-363. UDP-N-acetyl-alpha-D-glucosamine-binding residues include Tyr-366 and Asn-377. Residues Ala-380, 386 to 387 (NY), Ser-405, Ala-423, and Arg-440 contribute to the acetyl-CoA site.

This sequence in the N-terminal section; belongs to the N-acetylglucosamine-1-phosphate uridyltransferase family. In the C-terminal section; belongs to the transferase hexapeptide repeat family. In terms of assembly, homotrimer. Mg(2+) serves as cofactor.

It is found in the cytoplasm. The enzyme catalyses alpha-D-glucosamine 1-phosphate + acetyl-CoA = N-acetyl-alpha-D-glucosamine 1-phosphate + CoA + H(+). It catalyses the reaction N-acetyl-alpha-D-glucosamine 1-phosphate + UTP + H(+) = UDP-N-acetyl-alpha-D-glucosamine + diphosphate. The protein operates within nucleotide-sugar biosynthesis; UDP-N-acetyl-alpha-D-glucosamine biosynthesis; N-acetyl-alpha-D-glucosamine 1-phosphate from alpha-D-glucosamine 6-phosphate (route II): step 2/2. It participates in nucleotide-sugar biosynthesis; UDP-N-acetyl-alpha-D-glucosamine biosynthesis; UDP-N-acetyl-alpha-D-glucosamine from N-acetyl-alpha-D-glucosamine 1-phosphate: step 1/1. It functions in the pathway bacterial outer membrane biogenesis; LPS lipid A biosynthesis. Catalyzes the last two sequential reactions in the de novo biosynthetic pathway for UDP-N-acetylglucosamine (UDP-GlcNAc). The C-terminal domain catalyzes the transfer of acetyl group from acetyl coenzyme A to glucosamine-1-phosphate (GlcN-1-P) to produce N-acetylglucosamine-1-phosphate (GlcNAc-1-P), which is converted into UDP-GlcNAc by the transfer of uridine 5-monophosphate (from uridine 5-triphosphate), a reaction catalyzed by the N-terminal domain. This Enterobacter sp. (strain 638) protein is Bifunctional protein GlmU.